The primary structure comprises 987 residues: Mitotic checkpoint serine/threonine-protein kinase bub-1 (987 aa).

Disordered stretches follow at residues 278 to 385 and 574 to 599; these read RRRH…TSKS and LAAN…KDSS. The segment covering 350-364 has biased composition (basic and acidic residues); the sequence is ERLKIMTAGRKDGNP. The span at 368–380 shows a compositional bias: low complexity; sequence STSISSNYSTASA. The segment covering 575 to 587 has biased composition (polar residues); that stretch reads AANQAVQPSVTES. Residues 588–599 are compositionally biased toward basic and acidic residues; it reads SKPERSDPKDSS. One can recognise a Protein kinase domain in the interval 690 to 987; the sequence is LHIQTLIGQG…EACDLAANQK (298 aa). ATP-binding positions include 696 to 704 and lysine 718; that span reads IGQGGYAKV. Aspartate 814 (proton acceptor) is an active-site residue.

The protein belongs to the protein kinase superfamily. Ser/Thr protein kinase family. BUB1 subfamily. In terms of assembly, interacts (via kinase domain) with mdf-1 (via coiled coil domain); the interaction recruits mdf-1 to unattached kinetochores during mitosis and between homologous chromosomes in early anaphase of meiosis I. May interact with bub-3; for localization at the kinetochore and the onset of anaphase.

The protein localises to the cytoplasm. Its subcellular location is the cell cortex. It localises to the nucleus. The protein resides in the chromosome. It is found in the centromere. The protein localises to the kinetochore. It catalyses the reaction L-seryl-[protein] + ATP = O-phospho-L-seryl-[protein] + ADP + H(+). The enzyme catalyses L-threonyl-[protein] + ATP = O-phospho-L-threonyl-[protein] + ADP + H(+). Its function is as follows. Serine/threonine-protein kinase essential for spindle-assembly checkpoint signaling. Plays a key role in the recruitment of the checkpoint proteins bub-3, mdf-1 and mdf-2 to unattached kinetochores. mdf-1 recruitment is independent of bub-1 kinase activity. Has a role in the correct kinetochore localization of the spindly-like protein spdl-1. In addition, during meiotic anaphase I, controls the recruitment of hcp-1/2 and klp-19 to the ring-shaped domain formed between chromosomes. Involved in chromosome alignment, chromosome homolog segregation and spindle assembly. In association with bub-3 at the kinetochore region of chromosomes, promotes the onset on anaphase independently from spindle checkpoint signaling and promotes the formation of stable end-on bipolar attachments of chromosomes. Plays a role in nuclear envelope breakdown. Required maternally during embryogenesis and in the zygote for the postembryonic development of several tissues including ventral cord neurons, gonad, intestine and seam cells. The protein is Mitotic checkpoint serine/threonine-protein kinase bub-1 of Caenorhabditis elegans.